The sequence spans 319 residues: Malate dehydrogenase (319 aa).

Residues 10 to 15 and D34 contribute to the NAD(+) site; that span reads GSGNIG. 2 residues coordinate substrate: R83 and R89. Residues N96 and 119-121 each bind NAD(+); that span reads ITN. Substrate-binding residues include N121 and R152. H176 serves as the catalytic Proton acceptor.

Belongs to the LDH/MDH superfamily. MDH type 3 family.

It carries out the reaction (S)-malate + NAD(+) = oxaloacetate + NADH + H(+). In terms of biological role, catalyzes the reversible oxidation of malate to oxaloacetate. The protein is Malate dehydrogenase of Paramagnetospirillum magneticum (strain ATCC 700264 / AMB-1) (Magnetospirillum magneticum).